The sequence spans 59 residues: Large ribosomal subunit protein uL30 (59 aa).

It belongs to the universal ribosomal protein uL30 family. In terms of assembly, part of the 50S ribosomal subunit.

This Lactococcus lactis subsp. lactis (strain IL1403) (Streptococcus lactis) protein is Large ribosomal subunit protein uL30.